Here is a 115-residue protein sequence, read N- to C-terminus: U3-lycotoxin-Ls1h (115 aa).

An N-terminal signal peptide occupies residues 1-20 (MKFVLLFGVFLVTLFSYSSA). A propeptide spanning residues 21 to 44 (EMLDDFDQADEDELLSLIEKEEAR) is cleaved from the precursor. 4 disulfides stabilise this stretch: Cys-48-Cys-63, Cys-55-Cys-72, Cys-62-Cys-87, and Cys-74-Cys-85.

It belongs to the neurotoxin 19 (CSTX) family. 01 subfamily. Expressed by the venom gland.

It localises to the secreted. This Lycosa singoriensis (Wolf spider) protein is U3-lycotoxin-Ls1h.